Consider the following 431-residue polypeptide: tRNA(Ile)-lysidine synthase (431 aa).

Position 25 to 30 (S25 to S30) interacts with ATP.

This sequence belongs to the tRNA(Ile)-lysidine synthase family.

It is found in the cytoplasm. The enzyme catalyses cytidine(34) in tRNA(Ile2) + L-lysine + ATP = lysidine(34) in tRNA(Ile2) + AMP + diphosphate + H(+). Ligates lysine onto the cytidine present at position 34 of the AUA codon-specific tRNA(Ile) that contains the anticodon CAU, in an ATP-dependent manner. Cytidine is converted to lysidine, thus changing the amino acid specificity of the tRNA from methionine to isoleucine. The protein is tRNA(Ile)-lysidine synthase of Lactobacillus johnsonii (strain CNCM I-12250 / La1 / NCC 533).